A 315-amino-acid polypeptide reads, in one-letter code: MTLLAQLPTVRGKYIEAAPLKGLTWLRVGGPADVLYLPADESDLCRFLAETPDEIPVTVLGAGSNTLVRDGGVPGVVIRLAGAFAKTEALDGYRLRAGAGALDKMVAKAAAKAGIGGLEYLVGVPGTIGGALRMNAGCYDQETSDVVVEVIALDRMGRRIIASPDELAYSYRHCEAPEDWIFTGAVFQGQADDPDAITKRMNAITARRETTQPIREKTSGSTFANPDPPGTPNQRKSWELIDSVGGRGYRVGGAHFSEQHCNFLINDGTASAADLEQVGEDVRARVRQQHDIELRWEVRRIGRVSGDQKQEGQAG.

Residues 27–207 enclose the FAD-binding PCMH-type domain; that stretch reads RVGGPADVLY…TKRMNAITAR (181 aa). Arginine 172 is an active-site residue. Residues 214-236 are disordered; the sequence is IREKTSGSTFANPDPPGTPNQRK. Serine 221 serves as the catalytic Proton donor. Glutamate 297 is an active-site residue.

Belongs to the MurB family. Requires FAD as cofactor.

It is found in the cytoplasm. It catalyses the reaction UDP-N-acetyl-alpha-D-muramate + NADP(+) = UDP-N-acetyl-3-O-(1-carboxyvinyl)-alpha-D-glucosamine + NADPH + H(+). It functions in the pathway cell wall biogenesis; peptidoglycan biosynthesis. Cell wall formation. In Maricaulis maris (strain MCS10) (Caulobacter maris), this protein is UDP-N-acetylenolpyruvoylglucosamine reductase.